We begin with the raw amino-acid sequence, 597 residues long: DNA mismatch repair protein MutL (597 aa).

This sequence belongs to the DNA mismatch repair MutL/HexB family.

Functionally, this protein is involved in the repair of mismatches in DNA. It is required for dam-dependent methyl-directed DNA mismatch repair. May act as a 'molecular matchmaker', a protein that promotes the formation of a stable complex between two or more DNA-binding proteins in an ATP-dependent manner without itself being part of a final effector complex. In Rhodopseudomonas palustris (strain HaA2), this protein is DNA mismatch repair protein MutL.